The chain runs to 212 residues: Acyl-homoserine-lactone synthase (212 aa).

The protein belongs to the autoinducer synthase family.

The catalysed reaction is a fatty acyl-[ACP] + S-adenosyl-L-methionine = an N-acyl-L-homoserine lactone + S-methyl-5'-thioadenosine + holo-[ACP] + H(+). Required for the synthesis of OHHL (N-(3-oxohexanoyl)-L-homoserine lactone), an autoinducer molecule which binds to TraR and thus acts in the control of conjugal transfer. This chain is Acyl-homoserine-lactone synthase (traI), found in Rhizobium radiobacter (Agrobacterium tumefaciens).